We begin with the raw amino-acid sequence, 583 residues long: Putative glutaminase 3 (583 aa).

The segment at 1 to 29 (MDNKEKEDEELSDELKDQPGPSEKPRTPT) is disordered. The substrate site is built by serine 216, asparagine 265, glutamate 311, asparagine 318, tyrosine 344, tyrosine 396, and valine 414. 3 ANK repeats span residues 482-514 (DGQN…CKDY), 515-548 (DDRT…PCDR), and 549-581 (YDRT…LKGQ).

The protein belongs to the glutaminase family.

The enzyme catalyses L-glutamine + H2O = L-glutamate + NH4(+). In Caenorhabditis elegans, this protein is Putative glutaminase 3 (glna-3).